A 124-amino-acid chain; its full sequence is MARLVGVDLPRDKRMEVALTYIFGIGRTRSNEILAATGIDRDLRTRDLTEEQLIHLRDYIEANLKVEGDLRREVQADIRRKIEIGCYQGLRHRRGMPVRGQRTKTNARTRKGPKRTIAGKKKAR.

Positions 94–124 (RGMPVRGQRTKTNARTRKGPKRTIAGKKKAR) are disordered.

Belongs to the universal ribosomal protein uS13 family. In terms of assembly, part of the 30S ribosomal subunit. Forms a loose heterodimer with protein S19. Forms two bridges to the 50S subunit in the 70S ribosome.

Functionally, located at the top of the head of the 30S subunit, it contacts several helices of the 16S rRNA. In the 70S ribosome it contacts the 23S rRNA (bridge B1a) and protein L5 of the 50S subunit (bridge B1b), connecting the 2 subunits; these bridges are implicated in subunit movement. Contacts the tRNAs in the A and P-sites. This chain is Small ribosomal subunit protein uS13, found in Mycobacterium tuberculosis (strain ATCC 25177 / H37Ra).